The primary structure comprises 341 residues: L-threonine 3-dehydrogenase (341 aa).

Cys38 contributes to the Zn(2+) binding site. Residues Thr40 and His43 each act as charge relay system in the active site. The Zn(2+) site is built by His63, Glu64, Cys93, Cys96, Cys99, and Cys107. NAD(+) contacts are provided by residues Ile175, Asp195, Arg200, 262 to 264 (LGI), and 286 to 287 (IY).

It belongs to the zinc-containing alcohol dehydrogenase family. As to quaternary structure, homotetramer. It depends on Zn(2+) as a cofactor.

It is found in the cytoplasm. The catalysed reaction is L-threonine + NAD(+) = (2S)-2-amino-3-oxobutanoate + NADH + H(+). The protein operates within amino-acid degradation; L-threonine degradation via oxydo-reductase pathway; glycine from L-threonine: step 1/2. In terms of biological role, catalyzes the NAD(+)-dependent oxidation of L-threonine to 2-amino-3-ketobutyrate. In Shewanella oneidensis (strain ATCC 700550 / JCM 31522 / CIP 106686 / LMG 19005 / NCIMB 14063 / MR-1), this protein is L-threonine 3-dehydrogenase.